Here is an 84-residue protein sequence, read N- to C-terminus: Kunitz/BPTI-like toxin (84 aa).

Positions 1-24 (MSSGGLLLLLGLLTLWAELTPVSG) are cleaved as a signal peptide. The residue at position 25 (Gln-25) is a Pyrrolidone carboxylic acid. The 51-residue stretch at 31 to 81 (CHLPANPGPCRATITRFYYNSDSKQCEKFTYGGCHGNENNFETKDKCHYTC) folds into the BPTI/Kunitz inhibitor domain. 3 disulfide bridges follow: Cys-31–Cys-81, Cys-40–Cys-64, and Cys-56–Cys-77.

It localises to the secreted. Serine protease inhibitor. The polypeptide is Kunitz/BPTI-like toxin (Austrelaps superbus (Lowland copperhead snake)).